We begin with the raw amino-acid sequence, 90 residues long: uncharacterized protein (90 aa).

Residues 69–89 form a helical membrane-spanning segment; sequence LLYIFLGAMIVIIFLVIKNQL.

The protein belongs to the IIV-6 466R family.

It localises to the membrane. This is an uncharacterized protein from Invertebrate iridescent virus 6 (IIV-6).